Reading from the N-terminus, the 208-residue chain is Large ribosomal subunit protein uL4 (208 aa).

A disordered region spans residues R58–S77. Over residues G60 to G71 the composition is skewed to basic residues.

Belongs to the universal ribosomal protein uL4 family. As to quaternary structure, part of the 50S ribosomal subunit.

Functionally, one of the primary rRNA binding proteins, this protein initially binds near the 5'-end of the 23S rRNA. It is important during the early stages of 50S assembly. It makes multiple contacts with different domains of the 23S rRNA in the assembled 50S subunit and ribosome. Its function is as follows. Forms part of the polypeptide exit tunnel. The chain is Large ribosomal subunit protein uL4 from Caldicellulosiruptor bescii (strain ATCC BAA-1888 / DSM 6725 / KCTC 15123 / Z-1320) (Anaerocellum thermophilum).